The following is a 232-amino-acid chain: Histone H1B (232 aa).

The segment covering 1–18 (MSDPAVEVTPAVPVASPA) has biased composition (low complexity). Disordered stretches follow at residues 1 to 44 (MSDP…PPVS) and 99 to 232 (QTKG…AKKA). Residues 39–113 (THPPVSEMVV…GASGSFKLPA (75 aa)) enclose the H15 domain. Basic residues-rich tracts occupy residues 132–141 (KPKKAAAKPK), 147–173 (KVKKTIAKKPKAAAATKIKKPVAKTTK), 181–197 (AAKKAAPKPKAAPKPKA), 205–214 (KRAAAPKAKK), and 222–232 (KAAKKPAAKKA).

It belongs to the histone H1/H5 family.

Its subcellular location is the nucleus. It is found in the chromosome. Histones H1 are necessary for the condensation of nucleosome chains into higher-order structures. This Chironomus tentans (Midge) protein is Histone H1B.